The following is a 711-amino-acid chain: Cyclomaltodextrin glucanotransferase (711 aa).

The signal sequence occupies residues 1 to 31 (MRRWLSLVLSMSFVFSAIFIVSDTQKVTVEA). The tract at residues 32-165 (AGNLNKVNFT…GIKVIIDFAP (134 aa)) is A1. Residues aspartate 55, asparagine 57, asparagine 60, and asparagine 61 each contribute to the Ca(2+) site. A disulfide bridge links cysteine 71 with cysteine 78. The Ca(2+) site is built by glycine 79 and aspartate 81. Position 127-128 (127-128 (YW)) interacts with substrate. Residue asparagine 166 coordinates Ca(2+). The tract at residues 166–229 (NHTSPASETN…NLFDLADLNH (64 aa)) is b. Histidine 167 serves as a coordination point for substrate. Residue isoleucine 217 coordinates Ca(2+). 220–223 (NLFD) contributes to the substrate binding site. Aspartate 226 is a binding site for Ca(2+). The interval 230–433 (QNPVIDRYLK…LRRNNPALAY (204 aa)) is A2. A substrate-binding site is contributed by arginine 254. The active-site Nucleophile is aspartate 256. 259 to 260 (KH) serves as a coordination point for substrate. Histidine 260 contributes to the Ca(2+) binding site. Glutamate 284 serves as the catalytic Proton donor. 3 residues coordinate substrate: histidine 354, aspartate 398, and arginine 402. The c stretch occupies residues 434–522 (GDTEQRWING…EVGVWAYSAT (89 aa)). The tract at residues 523 to 606 (ESTPIIGHVG…SAAYDNFEVL (84 aa)) is d. One can recognise an IPT/TIG domain in the interval 526–604 (PIIGHVGPMM…QTSAAYDNFE (79 aa)). The CBM20 domain occupies 605–711 (VLTNDQVSVR…TGKIIVDWQN (107 aa)). The interval 607 to 711 (TNDQVSVRFV…TGKIIVDWQN (105 aa)) is e.

The protein belongs to the glycosyl hydrolase 13 family. In terms of assembly, monomer. Requires Ca(2+) as cofactor.

Its subcellular location is the secreted. The catalysed reaction is Cyclizes part of a (1-&gt;4)-alpha-D-glucan chain by formation of a (1-&gt;4)-alpha-D-glucosidic bond.. This is Cyclomaltodextrin glucanotransferase (cgt) from Geobacillus stearothermophilus (Bacillus stearothermophilus).